The sequence spans 480 residues: Nuclear receptor subfamily 6 group A member 1 (480 aa).

The tract at residues 1 to 32 is disordered; the sequence is MERDEPPPSGGGGGGGSAGFLEPPAALPPPPR. Residues 57 to 132 constitute a DNA-binding region (nuclear receptor); it reads QRTCLICGDR…MGMNRKAIRE (76 aa). Positions 60, 63, 77, 80, 96, 102, 112, and 115 each coordinate Zn(2+). 2 NR C4-type zinc fingers span residues 60–80 and 96–120; these read CLIC…CEGC and CSRD…LLKC. 2 disordered regions span residues 131–150 and 162–199; these read REDG…QISE and FEEE…LSSS. Basic and acidic residues predominate over residues 165-177; it reads EANHWSNHGDSDH. The sufficient for interaction with UIMC1 stretch occupies residues 172-253; the sequence is HGDSDHSSPG…RSLDPQSYSL (82 aa). Positions 187–199 are enriched in low complexity; the sequence is SNQPSPGSTLSSS. The region spanning 249–480 is the NR LBD domain; it reads QSYSLIHQLL…HSCKTSVGKE (232 aa).

Belongs to the nuclear hormone receptor family. NR6 subfamily. In terms of assembly, homodimer. Interacts with UIMC1. In terms of tissue distribution, shows highest expression in the germ cells of the adult testis.

It is found in the nucleus. Its function is as follows. Orphan nuclear receptor that binds to a response element containing the sequence 5'-TCAAGGTCA-3'. Acts as a regulator of embryonic stem cell pluripotency by mediating repression of POU5F1/OCT4: binds to the DR0 element within the POU5F1/OCT4 promoter and inhibits POU5F1/OCT4 expression during embryonic stem cell differentiation. Involved in the regulation of gene expression in germ cell development during gametogenesis. The chain is Nuclear receptor subfamily 6 group A member 1 (NR6A1) from Homo sapiens (Human).